Here is a 299-residue protein sequence, read N- to C-terminus: DNA-binding transcriptional repressor CapW (299 aa).

The segment at 1–84 is winged HTH domain; that stretch reads MESSGSSKVR…EFKPITKRSE (84 aa). The interval 85–196 is WYL domain; sequence ATRYLNELQR…IGRLDVLEHV (112 aa). One can recognise a WYL domain in the interval 120-200; the sequence is SRAIEADEVA…DVLEHVFSAK (81 aa). Residues 145 to 189 form a probable ligand-binding region region; it reads YQSMDAPEPQEWVLSPHALGFDGLRWHARAWCHARQVFRDFAIGR. Residues 197-299 form a WCX domain region; sequence FSAKPVDPLL…DRDGLQHLRR (103 aa).

Homodimer.

Functionally, transcriptional regulator of a CBASS antivirus system. CBASS (cyclic oligonucleotide-based antiphage signaling system) provides immunity against bacteriophage. The CD-NTase protein synthesizes cyclic nucleotides in response to infection; these serve as specific second messenger signals. The signals activate a diverse range of effectors, leading to bacterial cell death and thus abortive phage infection. A type III CBASS system, part of a CapW-Cap6-Cap8-Cap7-CdnC-NucC locus. Binds specifically to palindromes that overlap the -10 site in the promoter of cap6, found beween found between the genes for divergently transcribed capW and cap6 (cognate DNA). Probably represses transcription bidirectionally from the promoter. Mutations that make it a constitutive repressor in E.coli do not change DNA-binding affinity. The chain is DNA-binding transcriptional repressor CapW from Stenotrophomonas maltophilia (Pseudomonas maltophilia).